Reading from the N-terminus, the 388-residue chain is Processive diacylglycerol beta-glucosyltransferase (388 aa).

It belongs to the glycosyltransferase 28 family. UgtP subfamily.

It is found in the cell membrane. The enzyme catalyses a 1,2-diacyl-3-O-(beta-D-glucopyranosyl)-sn-glycerol + UDP-alpha-D-glucose = a 1,2-diacyl-3-O-(beta-D-Glc-(1-&gt;6)-beta-D-Glc)-sn-glycerol + UDP + H(+). The catalysed reaction is a 1,2-diacyl-3-O-(beta-D-Glc-(1-&gt;6)-beta-D-Glc)-sn-glycerol + UDP-alpha-D-glucose = a 1,2-diacyl-3-O-(beta-D-Glc-(1-&gt;6)-beta-D-Glc-(1-&gt;6)-beta-D-Glc)-sn-glycerol + UDP + H(+). It carries out the reaction a 1,2-diacyl-sn-glycerol + UDP-alpha-D-glucose = a 1,2-diacyl-3-O-(beta-D-glucopyranosyl)-sn-glycerol + UDP + H(+). The protein operates within glycolipid metabolism; diglucosyl-diacylglycerol biosynthesis. Processive glucosyltransferase involved in the biosynthesis of both the bilayer- and non-bilayer-forming membrane glucolipids. Is able to successively transfer up to three glucosyl residues to diacylglycerol (DAG), thereby catalyzing the formation of beta-monoglucosyl-DAG (3-O-(beta-D-glucopyranosyl)-1,2-diacyl-sn-glycerol), beta-diglucosyl-DAG (3-O-(beta-D-glucopyranosyl-beta-(1-&gt;6)-D-glucopyranosyl)-1,2-diacyl-sn-glycerol) and beta-triglucosyl-DAG (3-O-(beta-D-glucopyranosyl-beta-(1-&gt;6)-D-glucopyranosyl-beta-(1-&gt;6)-D-glucopyranosyl)-1,2-diacyl-sn-glycerol). Beta-diglucosyl-DAG is the predominant glycolipid found in Bacillales and is also used as a membrane anchor for lipoteichoic acid (LTA). The protein is Processive diacylglycerol beta-glucosyltransferase of Bacillus cereus (strain B4264).